Consider the following 268-residue polypeptide: Undecaprenyl-diphosphatase (268 aa).

Helical transmembrane passes span 5 to 25, 43 to 63, 84 to 104, 106 to 126, 184 to 204, 213 to 233, and 248 to 268; these read SIIS…IPVS, GNTF…LVYF, FSVL…HGFI, AVLF…GVIL, AAEF…TLDL, FDDI…GIVV, and PFAI…WLVG.

It belongs to the UppP family.

It is found in the cell inner membrane. It catalyses the reaction di-trans,octa-cis-undecaprenyl diphosphate + H2O = di-trans,octa-cis-undecaprenyl phosphate + phosphate + H(+). Catalyzes the dephosphorylation of undecaprenyl diphosphate (UPP). Confers resistance to bacitracin. In Sinorhizobium fredii (strain NBRC 101917 / NGR234), this protein is Undecaprenyl-diphosphatase.